The chain runs to 328 residues: Alpha-tubulin N-acetyltransferase 2 (328 aa).

The N-acetyltransferase domain occupies 5–185 (SQVALLPKLS…NNFVVFHRYF (181 aa)). Acetyl-CoA contacts are provided by residues 119–132 (FFVD…GFGK) and 155–164 (SVKFLAFLRK). Disordered stretches follow at residues 219–261 (EYQS…PGKK) and 282–328 (GGDP…TPEH). Positions 238–248 (TPPPPLPPPLV) are enriched in pro residues. Residues 312 to 328 (PTRSGVQYNIISGTPEH) show a composition bias toward polar residues.

It belongs to the acetyltransferase ATAT1 family.

The catalysed reaction is L-lysyl-[alpha-tubulin] + acetyl-CoA = N(6)-acetyl-L-lysyl-[alpha-tubulin] + CoA + H(+). Specifically acetylates 'Lys-40' in alpha-tubulin on the lumenal side of microtubules. Promotes microtubule destabilization and accelerates microtubule dynamics; this activity may be independent of acetylation activity. Acetylates alpha-tubulin with a slow enzymatic rate, due to a catalytic site that is not optimized for acetyl transfer. Enters the microtubule through each end and diffuses quickly throughout the lumen of microtubules. Acetylates only long/old microtubules because of its slow acetylation rate since it does not have time to act on dynamically unstable microtubules before the enzyme is released. The polypeptide is Alpha-tubulin N-acetyltransferase 2 (Trypanosoma cruzi (strain CL Brener)).